The following is a 382-amino-acid chain: Pyrimidine monooxygenase RutA (382 aa).

Residues I68–K69, N134, E143, R159–Y160, and S209 each bind FMN.

It belongs to the NtaA/SnaA/DszA monooxygenase family. RutA subfamily.

The enzyme catalyses uracil + FMNH2 + NADH + O2 = (Z)-3-ureidoacrylate + FMN + NAD(+) + H2O + H(+). The catalysed reaction is thymine + FMNH2 + NADH + O2 = (Z)-2-methylureidoacrylate + FMN + NAD(+) + H2O + H(+). Functionally, catalyzes the pyrimidine ring opening between N-3 and C-4 by an unusual flavin hydroperoxide-catalyzed mechanism, adding oxygen atoms in the process to yield ureidoacrylate peracid, that immediately reacts with FMN forming ureidoacrylate and FMN-N(5)-oxide. The FMN-N(5)-oxide reacts spontaneously with NADH to produce FMN. Requires the flavin reductase RutF to regenerate FMN in vivo. The chain is Pyrimidine monooxygenase RutA from Escherichia coli O81 (strain ED1a).